A 595-amino-acid chain; its full sequence is Merlin (595 aa).

Ser-13 carries the phosphoserine modification. The FERM domain occupies 22–311 (FTVRIVTMDA…GNHDLFMRRR (290 aa)). Ser-518 is modified (phosphoserine; by PAK).

As to quaternary structure, interacts with NHERF1, HGS and AGAP2. Interacts with LAYN. Interacts with SGSM3. Interacts (via FERM domain) with MPP1. Interacts with WWC1. Interacts with the CUL4A-RBX1-DDB1-VprBP/DCAF1 E3 ubiquitin-protein ligase complex. The unphosphorylated form interacts (via FERM domain) with VPRBP/DCAF1. Interacts (via FERM domain) with NOP53; the interaction is direct. Interacts with SCHIP1; the interaction is direct. Post-translationally, phosphorylation of Ser-518 inhibits nuclear localization by disrupting the intramolecular association of the FERM domain with the C-terminal tail. The dephosphorylation of Ser-518 favors the interaction with NOP53. Ubiquitinated by the CUL4A-RBX1-DDB1-DCAF1/VprBP E3 ubiquitin-protein ligase complex for ubiquitination and subsequent proteasome-dependent degradation. In terms of tissue distribution, widely expressed. Isoform 1 and isoform 3 are predominant. Isoform 4, isoform 5 and isoform 6 are expressed moderately. Isoform 8 is found at low frequency. Isoform 7, isoform 9 and isoform 10 are not expressed in adult tissues, with the exception of adult retina expressing isoform 10. Isoform 9 is faintly expressed in fetal brain, heart, lung, skeletal muscle and spleen. Fetal thymus expresses isoforms 1, 7, 9 and 10 at similar levels.

It localises to the cell projection. It is found in the filopodium membrane. The protein resides in the ruffle membrane. Its subcellular location is the nucleus. The protein localises to the cytoplasm. It localises to the perinuclear region. It is found in the cytoplasmic granule. The protein resides in the cytoskeleton. In terms of biological role, probable regulator of the Hippo/SWH (Sav/Wts/Hpo) signaling pathway, a signaling pathway that plays a pivotal role in tumor suppression by restricting proliferation and promoting apoptosis. Along with WWC1 can synergistically induce the phosphorylation of LATS1 and LATS2 and can probably function in the regulation of the Hippo/SWH (Sav/Wts/Hpo) signaling pathway. May act as a membrane stabilizing protein. May inhibit PI3 kinase by binding to AGAP2 and impairing its stimulating activity. Suppresses cell proliferation and tumorigenesis by inhibiting the CUL4A-RBX1-DDB1-VprBP/DCAF1 E3 ubiquitin-protein ligase complex. This is Merlin (NF2) from Homo sapiens (Human).